A 697-amino-acid chain; its full sequence is uncharacterized protein (697 aa).

Residues 516–545 (ADQSQNDVVALSSRIDRLTQEVVALQNSEK) are a coiled coil.

This is an uncharacterized protein from Callospermophilus lateralis (Golden-mantled ground squirrel).